The sequence spans 220 residues: UPF0502 protein Pnap_3223 (220 aa).

It belongs to the UPF0502 family.

This is UPF0502 protein Pnap_3223 from Polaromonas naphthalenivorans (strain CJ2).